A 623-amino-acid chain; its full sequence is V-type proton ATPase catalytic subunit A (623 aa).

Position 252–259 (252–259) interacts with ATP; that stretch reads GAFGCGKT.

Belongs to the ATPase alpha/beta chains family. As to quaternary structure, V-ATPase is a heteromultimeric enzyme composed of a peripheral catalytic V1 complex (main components: subunits A, B, C, D, E, and F) attached to an integral membrane V0 proton pore complex (main component: the proteolipid protein).

The enzyme catalyses ATP + H2O + 4 H(+)(in) = ADP + phosphate + 5 H(+)(out). Catalytic subunit of the peripheral V1 complex of vacuolar ATPase. V-ATPase vacuolar ATPase is responsible for acidifying a variety of intracellular compartments in eukaryotic cells. The polypeptide is V-type proton ATPase catalytic subunit A (Citrus unshiu (Satsuma mandarin)).